Here is a 251-residue protein sequence, read N- to C-terminus: Isoprenyl transferase (251 aa).

Residue Asp24 is part of the active site. Position 24 (Asp24) interacts with Mg(2+). Substrate is bound by residues 25 to 28 (GNGR), Trp29, Arg37, His41, and 69 to 71 (STE). Asn72 (proton acceptor) is an active-site residue. Substrate contacts are provided by residues Trp73, Arg75, Arg186, and 192–194 (RIS). Glu205 serves as a coordination point for Mg(2+).

It belongs to the UPP synthase family. In terms of assembly, homodimer. It depends on Mg(2+) as a cofactor.

Catalyzes the condensation of isopentenyl diphosphate (IPP) with allylic pyrophosphates generating different type of terpenoids. This chain is Isoprenyl transferase, found in Chromobacterium violaceum (strain ATCC 12472 / DSM 30191 / JCM 1249 / CCUG 213 / NBRC 12614 / NCIMB 9131 / NCTC 9757 / MK).